We begin with the raw amino-acid sequence, 722 residues long: NCK-interacting protein with SH3 domain (722 aa).

One can recognise an SH3 domain in the interval 1–58 (MYRALYAFRSAEPNALAFAAGETFLVLERSSAHWWLAARARSGETGYVPPAYLRRLQG). Disordered stretches follow at residues 101–122 (KETLSRRGPSASSVAVMTSSTS) and 149–286 (PSSE…ASDD). Over residues 110–121 (SASSVAVMTSST) the composition is skewed to low complexity. Residue serine 120 is modified to Phosphoserine. A compositionally biased stretch (pro residues) spans 169–185 (QIPPQPRRAAPTTPPPP). The Nuclear localization signal signature appears at 175-192 (RRAAPTTPPPPVKRRDRE). Threonine 181 is subject to Phosphothreonine. The span at 206-240 (PSGGNSVSSGSSVSSTSLDTLYTSSSPSEPGSSCS) shows a compositional bias: low complexity. Residue serine 294 is modified to Phosphoserine.

As to quaternary structure, associates with the intermediate filaments, vimentin and desmin. Binds the first and third SH3 domains of NCK. Binds the proline-rich domains of N-WASP through its SH3 domain. Similarly, binds diaphanous protein homolog 1 (DRF1). Binds the SH3 domains of GRB2 through its proline-rich domains. Interacts with Helicobacter pylori toxin vacA. Isoform 4 interacts with FHOD1. Interacts with FASLG. Interacts with TMIGD2. In terms of tissue distribution, highest expression in heart, brain, skeletal muscle, kidney and liver. Lower levels in placenta, lung, small intestine and leukocytes. Weak expression in colon, thymus and spleen.

The protein localises to the nucleus. Its function is as follows. Has an important role in stress fiber formation induced by active diaphanous protein homolog 1 (DRF1). Induces microspike formation, in vivo. In vitro, stimulates N-WASP-induced ARP2/3 complex activation in the absence of CDC42. May play an important role in the maintenance of sarcomeres and/or in the assembly of myofibrils into sarcomeres. Implicated in regulation of actin polymerization and cell adhesion. Plays a role in angiogenesis. The chain is NCK-interacting protein with SH3 domain (NCKIPSD) from Homo sapiens (Human).